Reading from the N-terminus, the 475-residue chain is Sulfate adenylyltransferase subunit 1 (475 aa).

Residues 25–239 (KSLLRFLTCG…EVLETVEIQR (215 aa)) enclose the tr-type G domain. A G1 region spans residues 34–41 (GSVDDGKS). 34–41 (GSVDDGKS) contributes to the GTP binding site. A G2 region spans residues 92–96 (GITID). Positions 113–116 (DTPG) are G3. GTP contacts are provided by residues 113-117 (DTPGH) and 168-171 (NKMD). The interval 168–171 (NKMD) is G4. The interval 206-208 (SAL) is G5.

The protein belongs to the TRAFAC class translation factor GTPase superfamily. Classic translation factor GTPase family. CysN/NodQ subfamily. As to quaternary structure, heterodimer composed of CysD, the smaller subunit, and CysN.

The enzyme catalyses sulfate + ATP + H(+) = adenosine 5'-phosphosulfate + diphosphate. It functions in the pathway sulfur metabolism; hydrogen sulfide biosynthesis; sulfite from sulfate: step 1/3. With CysD forms the ATP sulfurylase (ATPS) that catalyzes the adenylation of sulfate producing adenosine 5'-phosphosulfate (APS) and diphosphate, the first enzymatic step in sulfur assimilation pathway. APS synthesis involves the formation of a high-energy phosphoric-sulfuric acid anhydride bond driven by GTP hydrolysis by CysN coupled to ATP hydrolysis by CysD. The protein is Sulfate adenylyltransferase subunit 1 of Escherichia coli (strain SE11).